The following is a 943-amino-acid chain: Protein translocase subunit SecA (943 aa).

ATP is bound by residues glutamine 90, 108–112, and aspartate 509; that span reads GEGKT. A disordered region spans residues 534–576; that stretch reads KPDNEHKPPIPQQRSSKAGGGFASKSESISNKNSKSSGASLFP. Residues 556–570 show a composition bias toward low complexity; the sequence is ASKSESISNKNSKSS.

Belongs to the SecA family. As to quaternary structure, monomer and homodimer. Part of the essential Sec protein translocation apparatus which comprises SecA, SecYEG and auxiliary proteins SecDF. Other proteins may also be involved.

Its subcellular location is the cell inner membrane. It localises to the cellular thylakoid membrane. It is found in the cytoplasm. The catalysed reaction is ATP + H2O + cellular proteinSide 1 = ADP + phosphate + cellular proteinSide 2.. In terms of biological role, part of the Sec protein translocase complex. Interacts with the SecYEG preprotein conducting channel. Has a central role in coupling the hydrolysis of ATP to the transfer of proteins into and across the cell membrane, serving as an ATP-driven molecular motor driving the stepwise translocation of polypeptide chains across the membrane. Functionally, probably participates in protein translocation into and across both the cytoplasmic and thylakoid membranes in cyanobacterial cells. In Prochlorococcus marinus (strain MIT 9515), this protein is Protein translocase subunit SecA.